The sequence spans 1031 residues: MGPCHGALQPLSLLVQAAMLAVALAQGTLPPFLPCELQPHGLVNCNWLFLKSVPHFSAAAPRDNVTSLSLLSNRIHHLHDSDFAQLSNLQKLNLKWNCPPAGLSPMHFPCHMTIEPNTFLAVPTLEELNLSYNGITTVPALPSSLVSLILSRTNILQLDPTSLTGLHALRFLYMDGNCYYKNPCGRALEVAPGALLGLGNLTHLSLKYNNLTTVPRSLPPSLEYLLLSYNHIVTLAPEDLANLTALRVLDVGGNCRRCDHARNPCVECPHKFPQLHSDTFSHLSRLEGLVLKDSSLYQLNPRWFRGLGNLTVLDLSENFLYDCITKTKAFQGLAQLRRLNLSFNYHKKVSFAHLTLAPSFGSLLSLQELDMHGIFFRSLSQKTLQPLARLPMLQRLYLQMNFINQAQLGIFKDFPGLRYIDLSDNRISGAVEPVATTGEVDGGKKVWLTSRDLTPGPLDTPSSEDFMPSCKNLSFTLDLSRNNLVTVQPEMFAQLSRLQCLRLSHNSISQAVNGSQFVPLTSLQVLDLSHNKLDLYHGRSFTELPRLEALDLSYNSQPFSMRGVGHNLSFVAQLPTLRYLSLAHNGIHSRVSQQLCSTSLWALDFSGNSLSQMWAEGDLYLRFFQGLRSLIRLDLSQNRLHTLLPCTLGNLPKSLQLLRLRNNYLAFFNWSSLTLLPNLETLDLAGNQLKALSNGSLPSGTQLQRLDVSRNSIIFVVPGFFALATRLRELNLSANALRTVEPSWFGFLAGSLEVLDVSANPLHCACGAAFVDFLLQVQAAVPGLPSRVKCGSPGQLQGRSIFAQDLRLCLDESLSWDCFGLSLLVVALGLAMPMLHHLCGWDLWYCFHLGLAWLPRRGWQRGADALSYDAFVVFDKAQSAVADWVYNELRVRLEERRGRRALRLCLEERDWLPGKTLFENLWASVYSSRKMLFVLAHTDQVSGLLRASFLLAQQRLLEDRKDVVVLVILSPDARRSRYVRLRQRLCRQSVLFWPHQPSGQRSFWAQLGMALTRDNRHFYNQNFCRGPTMAE.

Positions 1–25 (MGPCHGALQPLSLLVQAAMLAVALA) are cleaved as a signal peptide. Residues 26–817 (QGTLPPFLPC…LCLDESLSWD (792 aa)) lie on the Extracellular side of the membrane. A disulfide bond links cysteine 35 and cysteine 45. 47–51 (WLFLK) is a DNA binding site. LRR repeat units lie at residues 62 to 85 (RDNV…DFAQ), 87 to 110 (SNLQ…HFPC), 122 to 147 (VPTL…SLVS), 150 to 166 (LSRT…LTGL), 167 to 190 (HALR…ALEV), 198 to 221 (LGNL…LPPS), 223 to 242 (EYLL…DLAN), 243 to 268 (LTAL…CVEC), 283 to 306 (LSRL…WFRG), 308 to 332 (GNLT…AFQG), 333 to 356 (LAQL…HLTL), 363 to 386 (LLSL…TLQP), 390 to 413 (LPML…IFKD), 414 to 438 (FPGL…ATTG), 470 to 494 (CKNL…MFAQ), 496 to 519 (SRLQ…QFVP), 520 to 543 (LTSL…SFTE), 545 to 567 (PRLE…VGHN), 574 to 598 (LPTL…LCST), 600 to 622 (LWAL…LYLR), 627 to 650 (LRSL…TLGN), 652 to 675 (PKSL…SLTL), 676 to 699 (LPNL…SLPS), 701 to 723 (TQLQ…FFAL), 724 to 747 (ATRL…WFGF), and 749 to 772 (AGSL…AFVD). A glycan (N-linked (GlcNAc...) asparagine) is linked at asparagine 64. DNA-binding positions include 72-77 (SNRIHH) and 95-109 (KWNC…MHFP). A disulfide bridge connects residues cysteine 98 and cysteine 110. N-linked (GlcNAc...) asparagine glycosylation occurs at asparagine 129. Residues tyrosine 132, arginine 152, and 179-181 (YYK) each bind DNA. A disulfide bridge links cysteine 178 with cysteine 184. Asparagine 200 carries N-linked (GlcNAc...) asparagine glycosylation. Position 208 (tyrosine 208) interacts with DNA. Asparagine 210 and asparagine 242 each carry an N-linked (GlcNAc...) asparagine glycan. 2 disulfide bridges follow: cysteine 255-cysteine 268 and cysteine 258-cysteine 265. Cysteine 258 carries S-palmitoyl cysteine lipidation. Arginine 262 serves as a coordination point for DNA. Cysteine 265 is lipidated: S-palmitoyl cysteine. N-linked (GlcNAc...) asparagine glycosylation is found at asparagine 309 and asparagine 340. Cysteine 470 and cysteine 500 are disulfide-bonded. 2 N-linked (GlcNAc...) asparagine glycosylation sites follow: asparagine 472 and asparagine 513. An N-linked (GlcNAc...) asparagine glycan is attached at asparagine 567. Asparagine 669 and asparagine 694 each carry an N-linked (GlcNAc...) asparagine glycan. N-linked (GlcNAc...) asparagine glycosylation is present at asparagine 731. 2 disulfides stabilise this stretch: cysteine 764/cysteine 790 and cysteine 766/cysteine 809. A helical transmembrane segment spans residues 818–838 (CFGLSLLVVALGLAMPMLHHL). Over 839–1031 (CGWDLWYCFH…NFCRGPTMAE (193 aa)) the chain is Cytoplasmic. The 146-residue stretch at 866-1011 (LSYDAFVVFD…SFWAQLGMAL (146 aa)) folds into the TIR domain.

Belongs to the Toll-like receptor family. Monomer and homodimer. Exists as a monomer in the absence of unmethylated cytidine-phosphate-guanosine (CpG) ligand. Proteolytic processing of an insertion loop (Z-loop) is required for homodimerization upon binding to the unmethylated CpG ligand leading to its activation. Interacts with MYD88 via their respective TIR domains. Interacts with BTK. Interacts (via transmembrane domain) with UNC93B1. Interacts with CD300LH; the interaction may promote full activation of TLR9-triggered innate responses. Interacts with CNPY3 and HSP90B1; this interaction is required for proper folding in the endoplasmic reticulum. Interacts with SMPDL3B. Interacts with CD82; this interaction is essential for TLR9-dependent myddosome formation in response to CpG stimulation. Activated by proteolytic cleavage of the flexible loop between repeats LRR14 and LRR15 within the ectodomain. Cleavage requires UNC93B1. Proteolytically processed by first removing the majority of the ectodomain by either asparagine endopeptidase (AEP) or a cathepsin followed by a trimming event that is solely cathepsin mediated and required for optimal receptor signaling. In terms of processing, palmitoylated by ZDHHC3 in the Golgi regulates TLR9 trafficking from the Golgi to endosomes. Depalmitoylation by PPT1 controls the release of TLR9 from UNC93B1 in endosomes. Expressed in airway epithelium, vascular endothelium and inflammatory cells in blood vessels of the lungs (at protein level). Highly expressed in pulmonary intravascular macrophages (PIMs) and to a lesser extent in alveolar macrophages, neutrophiles, type-II alveolar epithelial cells and bronchial epithelial cells of the lungs (at protein level). High constitutive intracellular expression in leukocytes including polymorphonuclear leukocytes (PMNs), CD4 and CD8 T cells (at protein level). Expressed throughout the respiratory tract including larynx, upper, middle and lower trachea, and bronchus in isolated equine respiratory epithelial cells (ERECs) and in fully differentiated ERECs cultured at the air-fluid interface (AFI) (at protein level). Constitutively expressed in peripheral blood mononuclear cells (PBMCs), lymph nodes and spleen. The level of expression in PBMCs is about 2- to 3-fold higher than that in lymph nodes and spleen. Very low expression in liver, heart, lung, kidney, small intestine, colon and stomach. Low expression in the airway tissue epithelium of the larynx, upper trachea, middle tranchea, lower trachea, bronchus and spleen, and more abundant expression in mesenteric lymph node. Not expressed in fully differentiated bronchus epithelial cells cultured at the AFI for four weeks. Expressed in gingival tissue.

It localises to the endoplasmic reticulum membrane. It is found in the endosome. The protein localises to the lysosome. The protein resides in the cytoplasmic vesicle. Its subcellular location is the phagosome. It localises to the cell membrane. It is found in the cytoplasm. The protein localises to the nucleus. Key component of innate and adaptive immunity. TLRs (Toll-like receptors) control host immune response against pathogens through recognition of molecular patterns specific to microorganisms. TLR9 is a nucleotide-sensing TLR which is activated by unmethylated cytidine-phosphate-guanosine (CpG) dinucleotides. Acts via MYD88 and TRAF6, leading to NF-kappa-B activation, cytokine secretion and the inflammatory response. Upon CpG stimulation, induces B-cell proliferation, activation, survival and antibody production. This chain is Toll-like receptor 9, found in Equus caballus (Horse).